A 204-amino-acid polypeptide reads, in one-letter code: Large ribosomal subunit protein uL4 (204 aa).

A disordered region spans residues 49-75 (TKGRSDVSGGGKKPWRQKGRGGARAGS).

The protein belongs to the universal ribosomal protein uL4 family. In terms of assembly, part of the 50S ribosomal subunit.

Its function is as follows. One of the primary rRNA binding proteins, this protein initially binds near the 5'-end of the 23S rRNA. It is important during the early stages of 50S assembly. It makes multiple contacts with different domains of the 23S rRNA in the assembled 50S subunit and ribosome. Forms part of the polypeptide exit tunnel. In Campylobacter jejuni (strain RM1221), this protein is Large ribosomal subunit protein uL4.